Here is a 310-residue protein sequence, read N- to C-terminus: Aspartate carbamoyltransferase catalytic subunit (310 aa).

Positions 58 and 59 each coordinate carbamoyl phosphate. Residue Lys-86 participates in L-aspartate binding. Carbamoyl phosphate-binding residues include Arg-108, His-136, and Gln-139. 2 residues coordinate L-aspartate: Arg-169 and Arg-222. Carbamoyl phosphate is bound by residues Gly-264 and Pro-265.

This sequence belongs to the aspartate/ornithine carbamoyltransferase superfamily. ATCase family. Heterododecamer (2C3:3R2) of six catalytic PyrB chains organized as two trimers (C3), and six regulatory PyrI chains organized as three dimers (R2).

The catalysed reaction is carbamoyl phosphate + L-aspartate = N-carbamoyl-L-aspartate + phosphate + H(+). It functions in the pathway pyrimidine metabolism; UMP biosynthesis via de novo pathway; (S)-dihydroorotate from bicarbonate: step 2/3. Its function is as follows. Catalyzes the condensation of carbamoyl phosphate and aspartate to form carbamoyl aspartate and inorganic phosphate, the committed step in the de novo pyrimidine nucleotide biosynthesis pathway. The chain is Aspartate carbamoyltransferase catalytic subunit from Campylobacter fetus subsp. fetus (strain 82-40).